A 530-amino-acid polypeptide reads, in one-letter code: Capsid protein VP1 (530 aa).

A disordered region spans residues 1–20; it reads MMMASKDATSSVDGASGAGQ. A shell domain region spans residues 1 to 225; it reads MMMASKDATS…FLFLVPPTVE (225 aa). The segment at 226 to 278 is P1 sub-domain 1; it reads QKTRPFTLPNLPLSSLSNSRAPLPISSMGISPDNVQSVQFQNGRCTLDGRLVG. Residues 226–530 are protruding domain; sequence QKTRPFTLPN…SARGRLGLRR (305 aa). The segment at 279–405 is P2 sub-domain; the sequence is TTPVSLSHVA…GSSITEATHL (127 aa). The segment at 406-530 is P1 sub-domain 2; that stretch reads APSVYPPGFG…SARGRLGLRR (125 aa). A plays a role in binding to host histo-blood group structures antigens and in the formation of P-particles region spans residues 523–530; it reads RGRLGLRR.

It belongs to the caliciviridae capsid protein family. In terms of assembly, homodimer. Homomultimer. Interacts with the minor capsid protein VP2. Interacts (via C-terminus) with host type I histo-blood group structures antigens at the surface of target cells. May be cleaved by host protease to generate soluble capsid protein. Assembled capsid cannot be cleaved.

The protein localises to the virion. The protein resides in the host cytoplasm. Capsid protein self assembles to form an icosahedral capsid with a T=3 symmetry, about 38 nm in diameter, and consisting of 180 capsid proteins. A smaller form of capsid with a diameter of 23 nm might be capsid proteins assembled as icosahedron with T=1 symmetry. The capsid encapsulates the genomic RNA and is decorated with VP2 proteins. Attaches virion to target cells by binding histo-blood group antigens (HBGAs) present on gastroduodenal epithelial cells. In terms of biological role, the soluble capsid protein may play a role in viral immunoevasion. The chain is Capsid protein VP1 from Norovirus (strain Human/NoV/United States/Norwalk/1968/GI) (Hu/NV/NV/1968/US).